Reading from the N-terminus, the 340-residue chain is L-threonine 3-dehydrogenase (340 aa).

Zn(2+) is bound at residue Cys38. Residues Thr40 and His43 each act as charge relay system in the active site. Zn(2+) is bound by residues His63, Glu64, Cys93, Cys96, Cys99, and Cys107. Residues Ile175, Asp195, Arg200, 262-264 (LGI), and 286-287 (IY) contribute to the NAD(+) site.

It belongs to the zinc-containing alcohol dehydrogenase family. As to quaternary structure, homotetramer. Requires Zn(2+) as cofactor.

Its subcellular location is the cytoplasm. It catalyses the reaction L-threonine + NAD(+) = (2S)-2-amino-3-oxobutanoate + NADH + H(+). It functions in the pathway amino-acid degradation; L-threonine degradation via oxydo-reductase pathway; glycine from L-threonine: step 1/2. Its function is as follows. Catalyzes the NAD(+)-dependent oxidation of L-threonine to 2-amino-3-ketobutyrate. In Pseudoalteromonas atlantica (strain T6c / ATCC BAA-1087), this protein is L-threonine 3-dehydrogenase.